Consider the following 266-residue polypeptide: Ribosomal RNA small subunit methyltransferase A (266 aa).

Residues Asn-10, Ile-12, Gly-37, Glu-58, Asp-82, and Asn-105 each contribute to the S-adenosyl-L-methionine site.

Belongs to the class I-like SAM-binding methyltransferase superfamily. rRNA adenine N(6)-methyltransferase family. RsmA subfamily.

The protein resides in the cytoplasm. It carries out the reaction adenosine(1518)/adenosine(1519) in 16S rRNA + 4 S-adenosyl-L-methionine = N(6)-dimethyladenosine(1518)/N(6)-dimethyladenosine(1519) in 16S rRNA + 4 S-adenosyl-L-homocysteine + 4 H(+). Functionally, specifically dimethylates two adjacent adenosines (A1518 and A1519) in the loop of a conserved hairpin near the 3'-end of 16S rRNA in the 30S particle. May play a critical role in biogenesis of 30S subunits. In Mycoplasma capricolum subsp. capricolum (strain California kid / ATCC 27343 / NCTC 10154), this protein is Ribosomal RNA small subunit methyltransferase A.